Reading from the N-terminus, the 132-residue chain is Nucleoid-associated protein EspR (132 aa).

The H-T-H motif DNA-binding region spans 38 to 50; that stretch reads ITMSAPYLSQLRS.

In terms of assembly, homodimer. Binds DNA as a dimer of dimers.

Its subcellular location is the cytoplasm. It localises to the nucleoid. Virulence regulator that has both architectural and regulatory roles. Impacts cell wall functions and pathogenesis through regulation of multiple genes. The polypeptide is Nucleoid-associated protein EspR (Mycobacterium tuberculosis (strain CDC 1551 / Oshkosh)).